The sequence spans 384 residues: Glucans biosynthesis protein C (384 aa).

10 helical membrane passes run 17 to 37 (AWLM…THSW), 54 to 74 (FIHA…SYML), 91 to 111 (VGIP…ILLQ), 140 to 160 (LWFL…FTWF), 173 to 193 (AISL…YAAI), 212 to 232 (FIVM…LAFI), 240 to 260 (FTTP…AYLL), 274 to 294 (TESV…FSLG), 311 to 331 (ASLF…AYIT), and 338 to 358 (LIGF…LYEI).

It belongs to the acyltransferase 3 family. OpgC subfamily.

Its subcellular location is the cell membrane. It participates in glycan metabolism; osmoregulated periplasmic glucan (OPG) biosynthesis. In terms of biological role, necessary for the succinyl substitution of periplasmic glucans. Could catalyze the transfer of succinyl residues from the cytoplasmic side of the membrane to the nascent glucan backbones on the periplasmic side of the membrane. In Salmonella typhimurium (strain LT2 / SGSC1412 / ATCC 700720), this protein is Glucans biosynthesis protein C.